Consider the following 278-residue polypeptide: Orotidine 5'-phosphate decarboxylase (278 aa).

Residues aspartate 40, 62–64 (KTH), 93–102 (DRKFADIGNT), tyrosine 223, and arginine 242 contribute to the substrate site. Lysine 95 serves as the catalytic Proton donor.

The protein belongs to the OMP decarboxylase family.

It carries out the reaction orotidine 5'-phosphate + H(+) = UMP + CO2. The protein operates within pyrimidine metabolism; UMP biosynthesis via de novo pathway; UMP from orotate: step 2/2. The sequence is that of Orotidine 5'-phosphate decarboxylase (URA1) from Schizophyllum commune (Split gill fungus).